Reading from the N-terminus, the 89-residue chain is Teretoxin Tan22.12 (89 aa).

Residues 1–22 (MKVLFTLAMIVVTLCLGQRMRR) form the signal peptide.

This sequence belongs to the teretoxin C (TC) superfamily. Contains 4 disulfide bonds. In terms of tissue distribution, expressed by the venom duct.

The protein resides in the secreted. The chain is Teretoxin Tan22.12 from Terebra anilis (Auger snail).